The following is a 294-amino-acid chain: Probable 3-hydroxyisobutyrate dehydrogenase (294 aa).

Residues Thr-3–Asp-31 and Thr-93 each bind NAD(+). The active site involves Lys-168. Residue Lys-243 coordinates NAD(+).

This sequence belongs to the HIBADH-related family.

The catalysed reaction is 3-hydroxy-2-methylpropanoate + NAD(+) = 2-methyl-3-oxopropanoate + NADH + H(+). The protein operates within amino-acid degradation; L-valine degradation. This Mycobacterium bovis (strain ATCC BAA-935 / AF2122/97) protein is Probable 3-hydroxyisobutyrate dehydrogenase (mmsB).